Here is a 289-residue protein sequence, read N- to C-terminus: Protease HtpX (289 aa).

Helical transmembrane passes span 7–27 and 38–58; these read LFLL…NIIF and GGIL…SLFM. His-144 provides a ligand contact to Zn(2+). Glu-145 is a catalytic residue. Residue His-148 participates in Zn(2+) binding. The next 2 helical transmembrane spans lie at 155-175 and 194-214; these read VTMT…SRII and LVFW…ATMI. A Zn(2+)-binding site is contributed by Glu-223.

Belongs to the peptidase M48B family. Requires Zn(2+) as cofactor.

Its subcellular location is the cell inner membrane. This chain is Protease HtpX, found in Actinobacillus pleuropneumoniae serotype 5b (strain L20).